The following is a 452-amino-acid chain: Probable carboxypeptidase ACLA_088580 (452 aa).

A signal peptide spans 1–18 (MRSLTLLLSLSTALRSVA). N-linked (GlcNAc...) asparagine glycosylation is found at N107 and N156. Zn(2+) is bound at residue D175. The Proton acceptor role is filled by E207. Zn(2+) is bound at residue E208.

Belongs to the peptidase M20A family. The cofactor is Zn(2+).

It localises to the secreted. The protein is Probable carboxypeptidase ACLA_088580 of Aspergillus clavatus (strain ATCC 1007 / CBS 513.65 / DSM 816 / NCTC 3887 / NRRL 1 / QM 1276 / 107).